We begin with the raw amino-acid sequence, 254 residues long: Thiazole synthase (254 aa).

The Schiff-base intermediate with DXP role is filled by Lys95. 1-deoxy-D-xylulose 5-phosphate-binding positions include Gly156, 182–183, and 204–205; these read AG and NT.

The protein belongs to the ThiG family. Homotetramer. Forms heterodimers with either ThiH or ThiS.

It is found in the cytoplasm. It catalyses the reaction [ThiS sulfur-carrier protein]-C-terminal-Gly-aminoethanethioate + 2-iminoacetate + 1-deoxy-D-xylulose 5-phosphate = [ThiS sulfur-carrier protein]-C-terminal Gly-Gly + 2-[(2R,5Z)-2-carboxy-4-methylthiazol-5(2H)-ylidene]ethyl phosphate + 2 H2O + H(+). The protein operates within cofactor biosynthesis; thiamine diphosphate biosynthesis. Its function is as follows. Catalyzes the rearrangement of 1-deoxy-D-xylulose 5-phosphate (DXP) to produce the thiazole phosphate moiety of thiamine. Sulfur is provided by the thiocarboxylate moiety of the carrier protein ThiS. In vitro, sulfur can be provided by H(2)S. The protein is Thiazole synthase of Shewanella sp. (strain MR-7).